A 510-amino-acid polypeptide reads, in one-letter code: Inositol-3-phosphate synthase (510 aa).

NAD(+)-binding residues include glycine 70, glycine 71, asparagine 72, asparagine 73, aspartate 143, isoleucine 180, glutamine 190, arginine 193, threonine 230, alanine 231, asparagine 232, threonine 233, glycine 281, serine 282, aspartate 306, serine 309, asparagine 340, asparagine 341, aspartate 342, lysine 355, glycine 393, aspartate 394, aspartate 422, and serine 423.

The protein belongs to the myo-inositol 1-phosphate synthase family. It depends on NAD(+) as a cofactor.

It is found in the cytoplasm. Its subcellular location is the cytosol. The protein localises to the nucleus. The catalysed reaction is D-glucose 6-phosphate = 1D-myo-inositol 3-phosphate. It functions in the pathway polyol metabolism; myo-inositol biosynthesis; myo-inositol from D-glucose 6-phosphate: step 1/2. Key enzyme in myo-inositol biosynthesis pathway that catalyzes the conversion of glucose 6-phosphate to 1-myo-inositol 1-phosphate in a NAD-dependent manner. This chain is Inositol-3-phosphate synthase, found in Sesamum indicum (Oriental sesame).